The following is a 945-amino-acid chain: Collagen-like protein 1 (945 aa).

2 disordered regions span residues 80 to 226 and 257 to 441; these read SLKG…SPDL and GEKG…DKGE. Collagen-like domains lie at 83–142 and 146–205; these read GDPG…QGDK and GDVG…KGDK. Basic and acidic residues-rich tracts occupy residues 109–145 and 168–208; these read QGTKGEQGDQGEQGDKGDKGDKGDVGAKGDQGDKGDQ and DQGD…KGDK. N-linked (GlcNAc...) asparagine; by host glycosylation is present at Asn211. 5 consecutive Collagen-like domains span residues 257-376, 383-442, 488-547, 554-613, and 635-694; these read GEKG…KGDK, GDKG…KGEN, GEKG…VGDK, GDKG…KGDV, and GDKG…VGAS. An N-linked (GlcNAc...) asparagine; by host glycan is attached at Asn442. Over residues 488–687 the composition is skewed to basic and acidic residues; it reads GEKGDKGDTG…DKGDKGDKGD (200 aa). The segment at 488–712 is disordered; the sequence is GEKGDKGDTG…SPTTGENGDS (225 aa). A compositionally biased stretch (polar residues) spans 703–712; it reads SPTTGENGDS. N-linked (GlcNAc...) asparagine; by host glycosylation is present at Asn716. A disordered region spans residues 733 to 768; that stretch reads TNIKGDKGDKGDKGDKGDKGDTGDVGLKGDTGTPGS. Basic and acidic residues predominate over residues 736-754; that stretch reads KGDKGDKGDKGDKGDKGDT. Over residues 756-765 the composition is skewed to low complexity; the sequence is DVGLKGDTGT.

In terms of processing, may be hydroxylated on lysine by the viral-encoded procollagen-lysine,2-oxoglutarate 5-dioxygenase.

The protein localises to the virion. Its function is as follows. May participate in the formation of a layer of cross-linked glycosylated fibrils at the viral surface thus giving it a hairy-like appearance. This is Collagen-like protein 1 from Acanthamoeba polyphaga mimivirus (APMV).